The chain runs to 306 residues: Ribonuclease Z (306 aa).

Residues His-63, His-65, Asp-67, His-68, His-141, Asp-211, and His-269 each contribute to the Zn(2+) site. Asp-67 acts as the Proton acceptor in catalysis.

It belongs to the RNase Z family. Homodimer. Zn(2+) is required as a cofactor.

The enzyme catalyses Endonucleolytic cleavage of RNA, removing extra 3' nucleotides from tRNA precursor, generating 3' termini of tRNAs. A 3'-hydroxy group is left at the tRNA terminus and a 5'-phosphoryl group is left at the trailer molecule.. Zinc phosphodiesterase, which displays some tRNA 3'-processing endonuclease activity. Probably involved in tRNA maturation, by removing a 3'-trailer from precursor tRNA. The sequence is that of Ribonuclease Z from Staphylococcus aureus (strain MSSA476).